The primary structure comprises 520 residues: NAD(P)H-quinone oxidoreductase subunit 2 (520 aa).

The next 14 membrane-spanning stretches (helical) occupy residues 15–35, 42–62, 79–99, 106–126, 132–152, 167–187, 210–230, 244–264, 280–300, 306–326, 334–354, 378–398, 400–420, and 466–486; these read ILPEGIVIVTLMGVLIVDLIL, WIGYLAIAGLLAAIVALYFQW, LSIIFRGIIALSAVVTILMSI, GTALAEFIAILLTATLGGMFV, LVMIFISLETLSISSYLLTGY, LLIGASSTAVFLYGVSLLYGL, LGAVIALVFVIAGIGFKISAA, PTPVIAFLSVGSKAAGFALAI, FVFTALAVLSMILGNVVALAQ, MLAYSSIAQAGFVMIGLIAGT, IFYLLVYLFMNLCGFTCIILF, LGLSISLLSLGGIPPLAGFFG, IYLFWAGWQAGLYWLVLLGLV, and VGLVLTLIATSVAGILSNPLF.

The protein belongs to the complex I subunit 2 family. NDH-1 can be composed of about 15 different subunits; different subcomplexes with different compositions have been identified which probably have different functions.

The protein resides in the cellular thylakoid membrane. It carries out the reaction a plastoquinone + NADH + (n+1) H(+)(in) = a plastoquinol + NAD(+) + n H(+)(out). The catalysed reaction is a plastoquinone + NADPH + (n+1) H(+)(in) = a plastoquinol + NADP(+) + n H(+)(out). Its function is as follows. NDH-1 shuttles electrons from an unknown electron donor, via FMN and iron-sulfur (Fe-S) centers, to quinones in the respiratory and/or the photosynthetic chain. The immediate electron acceptor for the enzyme in this species is believed to be plastoquinone. Couples the redox reaction to proton translocation, and thus conserves the redox energy in a proton gradient. Cyanobacterial NDH-1 also plays a role in inorganic carbon-concentration. The chain is NAD(P)H-quinone oxidoreductase subunit 2 from Nostoc sp. (strain PCC 7120 / SAG 25.82 / UTEX 2576).